Here is a 283-residue protein sequence, read N- to C-terminus: Pantothenate synthetase (283 aa).

30–37 (MGNLHNGH) lines the ATP pocket. H37 functions as the Proton donor in the catalytic mechanism. Q61 provides a ligand contact to (R)-pantoate. Q61 is a binding site for beta-alanine. 149–152 (GEKD) lines the ATP pocket. Q155 contacts (R)-pantoate. An ATP-binding site is contributed by 186–189 (LSSR).

This sequence belongs to the pantothenate synthetase family. In terms of assembly, homodimer.

The protein localises to the cytoplasm. It carries out the reaction (R)-pantoate + beta-alanine + ATP = (R)-pantothenate + AMP + diphosphate + H(+). The protein operates within cofactor biosynthesis; (R)-pantothenate biosynthesis; (R)-pantothenate from (R)-pantoate and beta-alanine: step 1/1. In terms of biological role, catalyzes the condensation of pantoate with beta-alanine in an ATP-dependent reaction via a pantoyl-adenylate intermediate. The protein is Pantothenate synthetase of Shigella flexneri serotype 5b (strain 8401).